The following is a 288-amino-acid chain: Beta-lactamase CARB-3 (288 aa).

Positions 1-17 are cleaved as a signal peptide; the sequence is MKFLLAFSLLIPSVVFA. Ser-65 (acyl-ester intermediate) is an active-site residue. Cysteines 72 and 118 form a disulfide. 229 to 231 provides a ligand contact to substrate; that stretch reads RSG.

Belongs to the class-A beta-lactamase family.

The enzyme catalyses a beta-lactam + H2O = a substituted beta-amino acid. Hydrolyzes both carbenicillin and oxacillin. In Pseudomonas aeruginosa, this protein is Beta-lactamase CARB-3 (carB3).